The sequence spans 37 residues: FECSVSCEIEKEGNKDCKKKKCKGGWKCKFNMCVKDI.

Cystine bridges form between Cys3–Cys17, Cys7–Cys28, and Cys22–Cys33.

It belongs to the neurotoxin 12 (Hwtx-2) family. 02 (Hwtx-2) subfamily. In terms of tissue distribution, expressed by the venom gland.

It localises to the secreted. Functionally, postsynaptic neurotoxin. The sequence is that of U4-theraphotoxin-Hhn1v from Cyriopagopus hainanus (Chinese bird spider).